The primary structure comprises 543 residues: Chaperonin GroEL (543 aa).

ATP is bound by residues 29–32, 86–90, Gly413, 477–479, and Asp493; these read TLGP, DGTTT, and DAL.

This sequence belongs to the chaperonin (HSP60) family. Forms a cylinder of 14 subunits composed of two heptameric rings stacked back-to-back. Interacts with the co-chaperonin GroES.

It is found in the cytoplasm. It catalyses the reaction ATP + H2O + a folded polypeptide = ADP + phosphate + an unfolded polypeptide.. Functionally, together with its co-chaperonin GroES, plays an essential role in assisting protein folding. The GroEL-GroES system forms a nano-cage that allows encapsulation of the non-native substrate proteins and provides a physical environment optimized to promote and accelerate protein folding. In Clostridium botulinum, this protein is Chaperonin GroEL.